The following is a 112-amino-acid chain: Photosystem II reaction center Psb28 protein (112 aa).

The protein belongs to the Psb28 family. In terms of assembly, part of the photosystem II complex.

It localises to the cellular thylakoid membrane. This chain is Photosystem II reaction center Psb28 protein, found in Synechococcus elongatus (strain ATCC 33912 / PCC 7942 / FACHB-805) (Anacystis nidulans R2).